Here is a 179-residue protein sequence, read N- to C-terminus: Peroxiredoxin (179 aa).

Residues 2 to 152 (TMEKQVPIVT…VEGWFEEEGF (151 aa)) form the Thioredoxin domain. The active-site Cysteine sulfenic acid (-SOH) intermediate (for peroxiredoxin activity) is the cysteine 56.

The protein belongs to the peroxiredoxin family. Prx5 subfamily. Monomer.

The enzyme catalyses a hydroperoxide + 2 glutathione = an alcohol + glutathione disulfide + H2O. In terms of biological role, thiol-specific peroxidase that catalyzes the reduction of hydrogen peroxide and organic hydroperoxides to water and alcohols, respectively. Plays a role in cell protection against oxidative stress by detoxifying peroxides. The chain is Peroxiredoxin from Rhizobium etli.